The following is a 107-amino-acid chain: Phosphoribosyl-ATP pyrophosphatase (107 aa).

The protein belongs to the PRA-PH family.

Its subcellular location is the cytoplasm. It carries out the reaction 1-(5-phospho-beta-D-ribosyl)-ATP + H2O = 1-(5-phospho-beta-D-ribosyl)-5'-AMP + diphosphate + H(+). It functions in the pathway amino-acid biosynthesis; L-histidine biosynthesis; L-histidine from 5-phospho-alpha-D-ribose 1-diphosphate: step 2/9. This chain is Phosphoribosyl-ATP pyrophosphatase, found in Sinorhizobium fredii (strain NBRC 101917 / NGR234).